The sequence spans 372 residues: Ketol-acid reductoisomerase (NADP(+)) (372 aa).

The disordered stretch occupies residues 1 to 25 (MTETKTQTETETDEEEGTDTDTALD). Positions 10-19 (TETDEEEGTD) are enriched in acidic residues. The KARI N-terminal Rossmann domain maps to 24–205 (LDTTIYYDDD…GCTRAGAIET (182 aa)). NADP(+) contacts are provided by residues 49 to 52 (YGSQ), S75, S77, and 107 to 110 (DTVQ). The active site involves H131. Position 157 (G157) interacts with NADP(+). The KARI C-terminal knotted domain occupies 206–351 (TFREETETDL…EPLRDLFAWS (146 aa)). Mg(2+)-binding residues include D214, E218, E250, and E254. S275 serves as a coordination point for substrate. Residues 351–372 (SDNEETNDESDVVSEPEAAADD) are disordered. Acidic residues predominate over residues 352–372 (DNEETNDESDVVSEPEAAADD).

It belongs to the ketol-acid reductoisomerase family. The cofactor is Mg(2+).

It carries out the reaction (2R)-2,3-dihydroxy-3-methylbutanoate + NADP(+) = (2S)-2-acetolactate + NADPH + H(+). It catalyses the reaction (2R,3R)-2,3-dihydroxy-3-methylpentanoate + NADP(+) = (S)-2-ethyl-2-hydroxy-3-oxobutanoate + NADPH + H(+). Its pathway is amino-acid biosynthesis; L-isoleucine biosynthesis; L-isoleucine from 2-oxobutanoate: step 2/4. It functions in the pathway amino-acid biosynthesis; L-valine biosynthesis; L-valine from pyruvate: step 2/4. Functionally, involved in the biosynthesis of branched-chain amino acids (BCAA). Catalyzes an alkyl-migration followed by a ketol-acid reduction of (S)-2-acetolactate (S2AL) to yield (R)-2,3-dihydroxy-isovalerate. In the isomerase reaction, S2AL is rearranged via a Mg-dependent methyl migration to produce 3-hydroxy-3-methyl-2-ketobutyrate (HMKB). In the reductase reaction, this 2-ketoacid undergoes a metal-dependent reduction by NADPH to yield (R)-2,3-dihydroxy-isovalerate. The chain is Ketol-acid reductoisomerase (NADP(+)) from Haloquadratum walsbyi (strain DSM 16790 / HBSQ001).